The primary structure comprises 37 residues: Large ribosomal subunit protein bL36c (37 aa).

The protein belongs to the bacterial ribosomal protein bL36 family.

The protein localises to the plastid. It is found in the chloroplast. In Acorus calamus (Sweet flag), this protein is Large ribosomal subunit protein bL36c.